The sequence spans 464 residues: MHMDDFSASLGFTDRSSRGILDTIEMIEKYRLDIRTVTMGISLLECARGSMEETATAVYDRVTSQAARLVEVCEGIERELGIPIVNKRISVTPIALVTAGCSGDPVDVARALDKAAKDVGVNFIGGYSALVEKGGTTSDIRLIRSIPEALSTTDVVCGSVNVASSRAGINMNAVNEMGKVVKQAAELTKDRSAIACAKLVVFANSVGDNPFMAGAFHGIEEPDCVVSVGVSGPGVVSRALGNLQGATLDQVAEEIKKAAFKITRTGQLVGAMASERLGVPFGIVDLSLAPTAEVGDSVANILEVMGLDQVGTHGTTAALALLNDAVKKGGMMACSRVGGLSGSFIPVSEDKGMIDAVRTGAISIDKLEAMTAICSVGLDMIAIPGDTPAETISGMIADEAAIGVMNHKTTAVRVIPVPGTVPGDEVDFGGLLGYAPVIPVNTVGNSEFIHRGGFIPAPVHGFRN.

It belongs to the UPF0210 family. Homodimer.

This Corynebacterium glutamicum (strain ATCC 13032 / DSM 20300 / JCM 1318 / BCRC 11384 / CCUG 27702 / LMG 3730 / NBRC 12168 / NCIMB 10025 / NRRL B-2784 / 534) protein is UPF0210 protein Cgl1545/cg1743.